We begin with the raw amino-acid sequence, 375 residues long: Chaperone protein DnaJ (375 aa).

The 66-residue stretch at 4 to 69 (DLYETLGVQK…QKRAAYDRYG (66 aa)) folds into the J domain. Residues 133–211 (GKTAQIRVPT…CHGQGRVVEE (79 aa)) form a CR-type zinc finger. Zn(2+)-binding residues include C146, C149, C163, C166, C185, C188, C199, and C202. CXXCXGXG motif repeat units lie at residues 146–153 (CDVCTGTG), 163–170 (CGTCQGTG), 185–192 (CPTCGGRG), and 199–206 (CTKCHGQG).

Belongs to the DnaJ family. Homodimer. The cofactor is Zn(2+).

It localises to the cytoplasm. Participates actively in the response to hyperosmotic and heat shock by preventing the aggregation of stress-denatured proteins and by disaggregating proteins, also in an autonomous, DnaK-independent fashion. Unfolded proteins bind initially to DnaJ; upon interaction with the DnaJ-bound protein, DnaK hydrolyzes its bound ATP, resulting in the formation of a stable complex. GrpE releases ADP from DnaK; ATP binding to DnaK triggers the release of the substrate protein, thus completing the reaction cycle. Several rounds of ATP-dependent interactions between DnaJ, DnaK and GrpE are required for fully efficient folding. Also involved, together with DnaK and GrpE, in the DNA replication of plasmids through activation of initiation proteins. The sequence is that of Chaperone protein DnaJ from Sinorhizobium medicae (strain WSM419) (Ensifer medicae).